The chain runs to 181 residues: Regulator of G-protein signaling 5 (181 aa).

The 117-residue stretch at 64–180 (SLDKLLQSNY…VRSEFYKELI (117 aa)) folds into the RGS domain.

The protein resides in the cytoplasm. It is found in the membrane. Functionally, inhibits signal transduction by increasing the GTPase activity of G protein alpha subunits thereby driving them into their inactive GDP-bound form. Binds to G(i)-alpha and G(o)-alpha, but not to G(s)-alpha. This is Regulator of G-protein signaling 5 (Rgs5) from Rattus norvegicus (Rat).